The chain runs to 359 residues: DNA replication and repair protein RecF (359 aa).

30-37 (GPNAKGKT) contributes to the ATP binding site.

Belongs to the RecF family.

The protein localises to the cytoplasm. In terms of biological role, the RecF protein is involved in DNA metabolism; it is required for DNA replication and normal SOS inducibility. RecF binds preferentially to single-stranded, linear DNA. It also seems to bind ATP. The protein is DNA replication and repair protein RecF of Protochlamydia amoebophila (strain UWE25).